Here is a 128-residue protein sequence, read N- to C-terminus: Holo-[acyl-carrier-protein] synthase (128 aa).

Positions 9 and 56 each coordinate Mg(2+).

This sequence belongs to the P-Pant transferase superfamily. AcpS family. The cofactor is Mg(2+).

The protein localises to the cytoplasm. The catalysed reaction is apo-[ACP] + CoA = holo-[ACP] + adenosine 3',5'-bisphosphate + H(+). Functionally, transfers the 4'-phosphopantetheine moiety from coenzyme A to a Ser of acyl-carrier-protein. In Pelagibacter ubique (strain HTCC1062), this protein is Holo-[acyl-carrier-protein] synthase.